The sequence spans 142 residues: Baculoviral IAP repeat-containing protein 5 (142 aa).

One copy of the BIR repeat lies at 18–88; that stretch reads RVSTFKNWPF…KHSSGCAFLS (71 aa). S20 carries the phosphoserine; by AURKC modification. The residue at position 23 (K23) is an N6-acetyllysine. A Phosphothreonine; by CDK1 and CDK15 modification is found at T34. T48 carries the post-translational modification Phosphothreonine. Residues C57, C60, H77, and C84 each contribute to the Zn(2+) site. 4 positions are modified to N6-acetyllysine: K90, K110, K112, and K115. At T117 the chain carries Phosphothreonine; by AURKB. K129 carries the post-translational modification N6-acetyllysine.

Belongs to the IAP family. Monomer or homodimer. Exists as a homodimer in the apo state and as a monomer in the CPC-bound state. The monomer protects cells against apoptosis more efficiently than the dimer. Only the dimeric form is capable of enhancing tubulin stability in cells. When phosphorylated, interacts with LAMTOR5/HBXIP; the resulting complex binds pro-CASP9, as well as active CASP9, but much less efficiently. Component of the chromosomal passenger complex (CPC) composed of at least BIRC5/survivin, CDCA8/borealin, INCENP, AURKB or AURKC; in the complex forms a triple-helix bundle-based subcomplex with INCENP and CDCA8. Interacts with JTB. Interacts (via BIR domain) with histone H3 phosphorylated at 'Thr-3' (H3pT3). Interacts with EVI5. Interacts with GTP-bound RAN in both the S and M phases of the cell cycle. Interacts with USP9X. Interacts with tubulin. Interacts with BIRC2/c-IAP1. The acetylated form at Lys-129 interacts with STAT3. The monomeric form deacetylated at Lys-129 interacts with XPO1/CRM1. The monomeric form interacts with XIAP/BIRC4. Both the dimeric and monomeric form can interact with DIABLO/SMAC. Interacts with BIRC6/bruce. Interacts with FBXL7; this interaction facilitates the polyubiquitination and subsequent proteasomal degradation of BIRC5 by the SCF(FBXL7) E3 ubiquitin-protein ligase complex. Ubiquitinated by the Cul9-RING ubiquitin-protein ligase complex, leading to its degradation. Ubiquitination is required for centrosomal targeting. Deubiquitinated by USP35 or USP38; leading to stabilization. In terms of processing, acetylation at Lys-129 results in its homodimerization, while deacetylation promotes the formation of monomers which heterodimerize with XPO1/CRM1 which facilitates its nuclear export. The acetylated form represses STAT3 transactivation. The dynamic equilibrium between its acetylation and deacetylation at Lys-129 determines its interaction with XPO1/CRM1, its subsequent subcellular localization, and its ability to inhibit STAT3 transactivation. Post-translationally, in vitro phosphorylation at Thr-117 by AURKB prevents interaction with INCENP and localization to mitotic chromosomes. Phosphorylation at Thr-48 by CK2 is critical for its mitotic and anti-apoptotic activities. Phosphorylation at Thr-34 by CDK15 is critical for its anti-apoptotic activity. Phosphorylation at Ser-20 by AURKC is critical for regulation of proper chromosome alignment and segregation, and possibly cytokinesis.

Its subcellular location is the cytoplasm. The protein resides in the nucleus. It is found in the chromosome. The protein localises to the centromere. It localises to the cytoskeleton. Its subcellular location is the spindle. The protein resides in the kinetochore. It is found in the midbody. Functionally, multitasking protein that has dual roles in promoting cell proliferation and preventing apoptosis. Component of a chromosome passage protein complex (CPC) which is essential for chromosome alignment and segregation during mitosis and cytokinesis. Acts as an important regulator of the localization of this complex; directs CPC movement to different locations from the inner centromere during prometaphase to midbody during cytokinesis and participates in the organization of the center spindle by associating with polymerized microtubules. Involved in the recruitment of CPC to centromeres during early mitosis via association with histone H3 phosphorylated at 'Thr-3' (H3pT3) during mitosis. The complex with RAN plays a role in mitotic spindle formation by serving as a physical scaffold to help deliver the RAN effector molecule TPX2 to microtubules. May counteract a default induction of apoptosis in G2/M phase. The acetylated form represses STAT3 transactivation of target gene promoters. May play a role in neoplasia. Inhibitor of CASP3 and CASP7. Essential for the maintenance of mitochondrial integrity and function. The polypeptide is Baculoviral IAP repeat-containing protein 5 (BIRC5) (Canis lupus familiaris (Dog)).